The sequence spans 276 residues: MLVIRLIACTFLFITPSLLAKPFPAERIISLAPHATEIAYAAGLGDKLVAVSEYSDYPPQALELERVANHQTINIEKILTLKPDLIIAWPAGNPPRELAKLRQLGFTIYDSQTKTLDEIADNIEALSHYSANPEVGQKAAHDFRQRLQDLRTQYASNQPIRYFYQLSEKPIITLAQGHWPSEVFSLCGGVNIFADSEVPYPQVSIEQVLVKQPQVIFTSEHAIANGHMWRAWQAELSAVQNDQVWALNADWLNRPTPRTLDAVEQVCTYLKIAQKQ.

The N-terminal stretch at 1–20 (MLVIRLIACTFLFITPSLLA) is a signal peptide. The region spanning 27 to 274 (RIISLAPHAT…QVCTYLKIAQ (248 aa)) is the Fe/B12 periplasmic-binding domain. Y54 is a cyanocob(III)alamin binding site. An intrachain disulfide couples C187 to C267.

This sequence belongs to the BtuF family. As to quaternary structure, the complex is composed of two ATP-binding proteins (BtuD), two transmembrane proteins (BtuC) and a solute-binding protein (BtuF).

Its subcellular location is the periplasm. Part of the ABC transporter complex BtuCDF involved in vitamin B12 import. Binds vitamin B12 and delivers it to the periplasmic surface of BtuC. In Vibrio cholerae serotype O1 (strain ATCC 39541 / Classical Ogawa 395 / O395), this protein is Vitamin B12-binding protein.